We begin with the raw amino-acid sequence, 171 residues long: Ribosome maturation factor RimM (171 aa).

Positions 97-170 (KLNYFSWDHY…IIYMKLPVGL (74 aa)) constitute a PRC barrel domain.

This sequence belongs to the RimM family. Binds ribosomal protein uS19.

The protein resides in the cytoplasm. Its function is as follows. An accessory protein needed during the final step in the assembly of 30S ribosomal subunit, possibly for assembly of the head region. Essential for efficient processing of 16S rRNA. May be needed both before and after RbfA during the maturation of 16S rRNA. It has affinity for free ribosomal 30S subunits but not for 70S ribosomes. The polypeptide is Ribosome maturation factor RimM (Azobacteroides pseudotrichonymphae genomovar. CFP2).